Here is a 195-residue protein sequence, read N- to C-terminus: dTTP/UTP pyrophosphatase (195 aa).

The active-site Proton acceptor is Asp-70.

This sequence belongs to the Maf family. YhdE subfamily. It depends on a divalent metal cation as a cofactor.

The protein resides in the cytoplasm. It catalyses the reaction dTTP + H2O = dTMP + diphosphate + H(+). The catalysed reaction is UTP + H2O = UMP + diphosphate + H(+). Nucleoside triphosphate pyrophosphatase that hydrolyzes dTTP and UTP. May have a dual role in cell division arrest and in preventing the incorporation of modified nucleotides into cellular nucleic acids. This chain is dTTP/UTP pyrophosphatase, found in Methanococcoides burtonii (strain DSM 6242 / NBRC 107633 / OCM 468 / ACE-M).